Reading from the N-terminus, the 111-residue chain is Protein BEX3 (111 aa).

Residues 1–63 form a disordered region; it reads MANIHQENEE…RQINDGMGGD (63 aa). The interval 68–93 is interaction with p75NTR/NGFR; the sequence is EIFMEEMREIRRKLRELQLRNCLRIL. Residues 68-111 are interaction with 14-3-3 epsilon; sequence EIFMEEMREIRRKLRELQLRNCLRILMGELSNHHDHHDEFCLMP. The Nuclear export signal motif lies at 77-87; sequence IRRKLRELQLR. Residues 100–104 are his cluster; sequence HHDHH. Cys-108 provides a ligand contact to Zn(2+).

Belongs to the BEX family. Self-associates. Binds to the DEATH domain of p75NTR/NGFR. Interacts with 14-3-3 epsilon (YWHAE). Interacts with DIABLO/SMAC. In terms of processing, ubiquitinated. Degraded by the proteasome. In terms of tissue distribution, found in ovarian granulosa cells, testis, prostate and seminal vesicle tissue. High levels also detected in liver.

The protein resides in the nucleus. It localises to the cytoplasm. The protein localises to the cytosol. Functionally, may be a signaling adapter molecule involved in NGFR/p75NTR-mediated apoptosis induced by NGF. Plays a role in zinc-triggered neuronal death. In absence of reductive stress, acts as a pseudosubstrate for the CRL2(FEM1B) complex: associates with FEM1B via zinc, thereby preventing association between FEM1B and its substrates. The polypeptide is Protein BEX3 (Homo sapiens (Human)).